The chain runs to 187 residues: Large ribosomal subunit protein uL5 (187 aa).

It belongs to the universal ribosomal protein uL5 family. In terms of assembly, part of the 50S ribosomal subunit; part of the 5S rRNA/L5/L18/L25 subcomplex. Contacts the 5S rRNA and the P site tRNA. Forms a bridge to the 30S subunit in the 70S ribosome.

Its function is as follows. This is one of the proteins that bind and probably mediate the attachment of the 5S RNA into the large ribosomal subunit, where it forms part of the central protuberance. In the 70S ribosome it contacts protein S13 of the 30S subunit (bridge B1b), connecting the 2 subunits; this bridge is implicated in subunit movement. Contacts the P site tRNA; the 5S rRNA and some of its associated proteins might help stabilize positioning of ribosome-bound tRNAs. The protein is Large ribosomal subunit protein uL5 of Roseobacter denitrificans (strain ATCC 33942 / OCh 114) (Erythrobacter sp. (strain OCh 114)).